The sequence spans 292 residues: ATP synthase subunit a (292 aa).

The next 7 helical transmembrane spans lie at Q39 to L59, F73 to G93, Y102 to I122, S128 to I148, T172 to L192, G196 to F216, and V231 to L251.

Belongs to the ATPase A chain family. In terms of assembly, F-type ATPases have 2 components, CF(1) - the catalytic core - and CF(0) - the membrane proton channel. CF(1) has five subunits: alpha(3), beta(3), gamma(1), delta(1), epsilon(1). CF(0) has three main subunits: a(1), b(2) and c(9-12). The alpha and beta chains form an alternating ring which encloses part of the gamma chain. CF(1) is attached to CF(0) by a central stalk formed by the gamma and epsilon chains, while a peripheral stalk is formed by the delta and b chains.

It is found in the cell membrane. Its function is as follows. Key component of the proton channel; it plays a direct role in the translocation of protons across the membrane. This chain is ATP synthase subunit a, found in Mycoplasma genitalium (strain ATCC 33530 / DSM 19775 / NCTC 10195 / G37) (Mycoplasmoides genitalium).